The chain runs to 66 residues: Large ribosomal subunit protein bL31 (66 aa).

Residues cysteine 16, cysteine 18, cysteine 36, and cysteine 39 each contribute to the Zn(2+) site.

This sequence belongs to the bacterial ribosomal protein bL31 family. Type A subfamily. As to quaternary structure, part of the 50S ribosomal subunit. It depends on Zn(2+) as a cofactor.

Functionally, binds the 23S rRNA. The chain is Large ribosomal subunit protein bL31 from Geobacter metallireducens (strain ATCC 53774 / DSM 7210 / GS-15).